The sequence spans 413 residues: Tyrosine--tRNA ligase (413 aa).

The 'HIGH' region signature appears at proline 59–histidine 68. The 'KMSKS' region signature appears at lysine 243 to serine 247. Lysine 246 provides a ligand contact to ATP. An S4 RNA-binding domain is found at leucine 351 to leucine 411.

The protein belongs to the class-I aminoacyl-tRNA synthetase family. TyrS type 2 subfamily. In terms of assembly, homodimer.

The protein resides in the cytoplasm. It carries out the reaction tRNA(Tyr) + L-tyrosine + ATP = L-tyrosyl-tRNA(Tyr) + AMP + diphosphate + H(+). Its function is as follows. Catalyzes the attachment of tyrosine to tRNA(Tyr) in a two-step reaction: tyrosine is first activated by ATP to form Tyr-AMP and then transferred to the acceptor end of tRNA(Tyr). The polypeptide is Tyrosine--tRNA ligase (Burkholderia thailandensis (strain ATCC 700388 / DSM 13276 / CCUG 48851 / CIP 106301 / E264)).